A 349-amino-acid chain; its full sequence is Microfibril-associated glycoprotein 3 (349 aa).

Residues 1-21 (MKLHHCLSFLLVVTLVPAALS) form the signal peptide. Over 22-139 (LEDVAPLGAN…TLRVIFTSGD (118 aa)) the chain is Extracellular. N-linked (GlcNAc...) asparagine glycans are attached at residues N31, N36, N63, and N103. The 90-residue stretch at 41-130 (PSFELSAGSY…SPARASYSVT (90 aa)) folds into the Ig-like C2-type domain. C68 and C117 are oxidised to a cystine. Residues 140–160 (MSVYYMVVCLIAFTITLILNV) form a helical membrane-spanning segment. Over 161–349 (TRLCLMSTHL…EGSIHHRVSI (189 aa)) the chain is Cytoplasmic. The segment at 280–349 (NPELGRSNSP…EGSIHHRVSI (70 aa)) is disordered. The span at 311–331 (VHLQSETKSIGTDSQDSSHFS) shows a compositional bias: polar residues.

Post-translationally, glycosylated.

The protein localises to the cell membrane. Component of the elastin-associated microfibrils. In Mus musculus (Mouse), this protein is Microfibril-associated glycoprotein 3 (Mfap3).